We begin with the raw amino-acid sequence, 386 residues long: Succinate--CoA ligase [ADP-forming] subunit beta (386 aa).

Residues 9–244 (KEILRKYGVP…HDEEDPLETR (236 aa)) enclose the ATP-grasp domain. Residues Lys-46, 53 to 55 (GRG), Glu-99, Cys-102, and Glu-107 each bind ATP. Residues Asn-199 and Asp-213 each contribute to the Mg(2+) site. Substrate is bound by residues Asn-264 and 321–323 (GIM).

This sequence belongs to the succinate/malate CoA ligase beta subunit family. As to quaternary structure, heterotetramer of two alpha and two beta subunits. Mg(2+) serves as cofactor.

The enzyme catalyses succinate + ATP + CoA = succinyl-CoA + ADP + phosphate. The catalysed reaction is GTP + succinate + CoA = succinyl-CoA + GDP + phosphate. It participates in carbohydrate metabolism; tricarboxylic acid cycle; succinate from succinyl-CoA (ligase route): step 1/1. Functionally, succinyl-CoA synthetase functions in the citric acid cycle (TCA), coupling the hydrolysis of succinyl-CoA to the synthesis of either ATP or GTP and thus represents the only step of substrate-level phosphorylation in the TCA. The beta subunit provides nucleotide specificity of the enzyme and binds the substrate succinate, while the binding sites for coenzyme A and phosphate are found in the alpha subunit. The chain is Succinate--CoA ligase [ADP-forming] subunit beta from Rickettsia typhi (strain ATCC VR-144 / Wilmington).